Consider the following 238-residue polypeptide: Monocyte to macrophage differentiation factor (238 aa).

Residues 1 to 28 (MQFRNRFQRFMNHRAPANGRYKPTCYEH) lie on the Cytoplasmic side of the membrane. The helical transmembrane segment at 29–49 (AANCYTHAFLIVPAIVGSALL) threads the bilayer. Residues 50-61 (HRLSDDCWEKIT) are Lumenal-facing. The helical transmembrane segment at 62 to 82 (AWIYGMGLCALFIVSTVFHIV) threads the bilayer. At 83-101 (SWKKSHLRTVEHCFHMCDR) the chain is on the cytoplasmic side. The chain crosses the membrane as a helical span at residues 102–122 (MVIYFFIAASYAPWLNLRELG). Position 123 (Pro123) is a topological domain, lumenal. The chain crosses the membrane as a helical span at residues 124-144 (LASHMRWFIWLMAAGGTIYVF). The Cytoplasmic portion of the chain corresponds to 145–151 (LYHEKYK). The helical transmembrane segment at 152 to 172 (VVELFFYLTMGFSPALVVTSM) threads the bilayer. Over 173 to 174 (NN) the chain is Lumenal. A helical membrane pass occupies residues 175–195 (TDGLQELACGGLIYCLGVVFF). The Cytoplasmic segment spans residues 196 to 198 (KSD). Residues 199–219 (GIIPFAHAIWHLFVATAAAVH) form a helical membrane-spanning segment. The Lumenal segment spans residues 220 to 238 (YYAIWKYLYRSPTDFIRHL).

Belongs to the ADIPOR family. In terms of tissue distribution, preferentially expressed in the brain.

The protein localises to the late endosome membrane. It is found in the lysosome membrane. Functionally, is involved in the dynamics of lysosomal membranes associated with microglial activation following brain lesion. This chain is Monocyte to macrophage differentiation factor, found in Rattus norvegicus (Rat).